The sequence spans 963 residues: Non-ribosomal peptide synthetase CmlP (963 aa).

In terms of domain architecture, Carrier spans 492 to 568 (GEDAAELRRV…AAFLRHLRGE (77 aa)). The residue at position 526 (Ser526) is an O-(pantetheine 4'-phosphoryl)serine. The disordered stretch occupies residues 928–963 (GRLLGTPPDTPAGDRPERTGTTAEAQNGAAHAPTPR).

Belongs to the ATP-dependent AMP-binding enzyme family. Pantetheine 4'-phosphate is required as a cofactor.

It catalyses the reaction 4-amino-L-phenylalanine + holo-[peptidyl-carrier protein] + ATP = 4-amino-L-phenylalanyl-[peptidyl-carrier protein] + AMP + diphosphate. It functions in the pathway antibiotic biosynthesis. Functionally, involved in chloramphenicol biosynthesis. Activates 4-amino-L-phenylalanine by adenylation and loads it onto its peptidyl carrier domain, via a thioester linkage to the phosphopanthetheine moiety. Can also adenylate tyrosine and phenylalanine at low rates, but not L-p-nitrophenylalanine or threo-phenylserine. The sequence is that of Non-ribosomal peptide synthetase CmlP from Streptomyces venezuelae (strain ATCC 10712 / CBS 650.69 / DSM 40230 / JCM 4526 / NBRC 13096 / PD 04745).